A 543-amino-acid chain; its full sequence is Cytochrome P450 1B1 (543 aa).

Cys-470 is a heme binding site.

It belongs to the cytochrome P450 family. Heme is required as a cofactor. As to expression, expressed in heart, brain, lung, skeletal muscle, kidney, spleen, thymus, prostate, testis, ovary, small intestine, colon, and peripheral blood leukocytes. Expressed in retinal endothelial cells and umbilical vein endothelial cells (at protein level).

Its subcellular location is the endoplasmic reticulum membrane. It is found in the microsome membrane. The protein resides in the mitochondrion. The catalysed reaction is an organic molecule + reduced [NADPH--hemoprotein reductase] + O2 = an alcohol + oxidized [NADPH--hemoprotein reductase] + H2O + H(+). It catalyses the reaction 17beta-estradiol + reduced [NADPH--hemoprotein reductase] + O2 = 2-hydroxy-17beta-estradiol + oxidized [NADPH--hemoprotein reductase] + H2O + H(+). It carries out the reaction 17beta-estradiol + reduced [NADPH--hemoprotein reductase] + O2 = 4-hydroxy-17beta-estradiol + oxidized [NADPH--hemoprotein reductase] + H2O + H(+). The enzyme catalyses estrone + reduced [NADPH--hemoprotein reductase] + O2 = 2-hydroxyestrone + oxidized [NADPH--hemoprotein reductase] + H2O + H(+). The catalysed reaction is estrone + reduced [NADPH--hemoprotein reductase] + O2 = 4-hydroxyestrone + oxidized [NADPH--hemoprotein reductase] + H2O + H(+). It catalyses the reaction testosterone + reduced [NADPH--hemoprotein reductase] + O2 = 6beta,17beta-dihydroxyandrost-4-en-3-one + oxidized [NADPH--hemoprotein reductase] + H2O + H(+). It carries out the reaction progesterone + reduced [NADPH--hemoprotein reductase] + O2 = 6beta-hydroxyprogesterone + oxidized [NADPH--hemoprotein reductase] + H2O + H(+). The enzyme catalyses progesterone + reduced [NADPH--hemoprotein reductase] + O2 = 16alpha-hydroxyprogesterone + oxidized [NADPH--hemoprotein reductase] + H2O + H(+). The catalysed reaction is all-trans-retinol + reduced [NADPH--hemoprotein reductase] + O2 = all-trans-retinal + oxidized [NADPH--hemoprotein reductase] + 2 H2O + H(+). It catalyses the reaction all-trans-retinal + reduced [NADPH--hemoprotein reductase] + O2 = all-trans-retinoate + oxidized [NADPH--hemoprotein reductase] + H2O + 2 H(+). It carries out the reaction (5Z,8Z,11Z,14Z)-eicosatetraenoate + reduced [NADPH--hemoprotein reductase] + O2 = (8R,9S)-epoxy-(5Z,11Z,14Z)-eicosatrienoate + oxidized [NADPH--hemoprotein reductase] + H2O + H(+). The enzyme catalyses (5Z,8Z,11Z,14Z)-eicosatetraenoate + reduced [NADPH--hemoprotein reductase] + O2 = (11R,12S)-epoxy-(5Z,8Z,14Z)-eicosatrienoate + oxidized [NADPH--hemoprotein reductase] + H2O + H(+). The catalysed reaction is (5Z,8Z,11Z,14Z)-eicosatetraenoate + reduced [NADPH--hemoprotein reductase] + O2 = (11S,12R)-epoxy-(5Z,8Z,14Z)-eicosatrienoate + oxidized [NADPH--hemoprotein reductase] + H2O + H(+). It catalyses the reaction (5Z,8Z,11Z,14Z)-eicosatetraenoate + reduced [NADPH--hemoprotein reductase] + O2 = (14R,15S)-epoxy-(5Z,8Z,11Z)-eicosatrienoate + oxidized [NADPH--hemoprotein reductase] + H2O + H(+). It carries out the reaction (5S)-hydroperoxy-(6E,8Z,11Z,14Z)-eicosatetraenoate = 5-oxo-(6E,8Z,11Z,14Z)-eicosatetraenoate + H2O. The enzyme catalyses (12S)-hydroperoxy-(5Z,8Z,10E,14Z)-eicosatetraenoate = 12-oxo-(5Z,8Z,10E,14Z)-eicosatetraenoate + H2O. The catalysed reaction is (13S)-hydroperoxy-(9Z,11E)-octadecadienoate = 13-oxo-(9Z,11E)-octadecadienoate + H2O. It catalyses the reaction (15S)-hydroperoxy-(5Z,8Z,11Z,13E)-eicosatetraenoate = 15-oxo-(5Z,8Z,11Z,13E)-eicosatetraenoate + H2O. The protein operates within steroid hormone biosynthesis. Its pathway is cofactor metabolism; retinol metabolism. It participates in lipid metabolism; arachidonate metabolism. Its activity is regulated as follows. Enzyme activity is increased by liposomes containing anionic phospholipids, phosphatidic acid and cardiolipin. Inhibited by naringenin with an IC(50) of 5 uM. Enzyme activity is increased by cytochrome b5. In terms of biological role, a cytochrome P450 monooxygenase involved in the metabolism of various endogenous substrates, including fatty acids, steroid hormones and vitamins. Mechanistically, uses molecular oxygen inserting one oxygen atom into a substrate, and reducing the second into a water molecule, with two electrons provided by NADPH via cytochrome P450 reductase (NADPH--hemoprotein reductase). Exhibits catalytic activity for the formation of hydroxyestrogens from estrone (E1) and 17beta-estradiol (E2), namely 2- and 4-hydroxy E1 and E2. Displays a predominant hydroxylase activity toward E2 at the C-4 position. Metabolizes testosterone and progesterone to B or D ring hydroxylated metabolites. May act as a major enzyme for all-trans retinoic acid biosynthesis in extrahepatic tissues. Catalyzes two successive oxidative transformation of all-trans retinol to all-trans retinal and then to the active form all-trans retinoic acid. Catalyzes the epoxidation of double bonds of certain PUFA. Converts arachidonic acid toward epoxyeicosatrienoic acid (EpETrE) regioisomers, 8,9-, 11,12-, and 14,15- EpETrE, that function as lipid mediators in the vascular system. Additionally, displays dehydratase activity toward oxygenated eicosanoids hydroperoxyeicosatetraenoates (HpETEs). This activity is independent of cytochrome P450 reductase, NADPH, and O2. Also involved in the oxidative metabolism of xenobiotics, particularly converting polycyclic aromatic hydrocarbons and heterocyclic aryl amines procarcinogens to DNA-damaging products. Plays an important role in retinal vascular development. Under hyperoxic O2 conditions, promotes retinal angiogenesis and capillary morphogenesis, likely by metabolizing the oxygenated products generated during the oxidative stress. Also, contributes to oxidative homeostasis and ultrastructural organization and function of trabecular meshwork tissue through modulation of POSTN expression. The protein is Cytochrome P450 1B1 of Homo sapiens (Human).